A 362-amino-acid polypeptide reads, in one-letter code: Anthranilate phosphoribosyltransferase (362 aa).

5-phospho-alpha-D-ribose 1-diphosphate-binding positions include G96, 99 to 100, T104, 106 to 109, 124 to 132, and G136; these read GD, NIST, and KHGNRAASS. Anthranilate is bound at residue G96. A Mg(2+)-binding site is contributed by S108. Anthranilate is bound at residue N127. Position 182 (R182) interacts with anthranilate. Mg(2+)-binding residues include D240 and E241.

The protein belongs to the anthranilate phosphoribosyltransferase family. As to quaternary structure, homodimer. Requires Mg(2+) as cofactor.

It carries out the reaction N-(5-phospho-beta-D-ribosyl)anthranilate + diphosphate = 5-phospho-alpha-D-ribose 1-diphosphate + anthranilate. It functions in the pathway amino-acid biosynthesis; L-tryptophan biosynthesis; L-tryptophan from chorismate: step 2/5. Catalyzes the transfer of the phosphoribosyl group of 5-phosphorylribose-1-pyrophosphate (PRPP) to anthranilate to yield N-(5'-phosphoribosyl)-anthranilate (PRA). This Rhodococcus jostii (strain RHA1) protein is Anthranilate phosphoribosyltransferase.